The primary structure comprises 507 residues: Probable cytosol aminopeptidase (507 aa).

Mn(2+)-binding residues include lysine 275 and aspartate 280. Residue lysine 287 is part of the active site. Mn(2+)-binding residues include aspartate 298, aspartate 357, and glutamate 359. The active site involves arginine 361.

This sequence belongs to the peptidase M17 family. The cofactor is Mn(2+).

The protein localises to the cytoplasm. The catalysed reaction is Release of an N-terminal amino acid, Xaa-|-Yaa-, in which Xaa is preferably Leu, but may be other amino acids including Pro although not Arg or Lys, and Yaa may be Pro. Amino acid amides and methyl esters are also readily hydrolyzed, but rates on arylamides are exceedingly low.. It carries out the reaction Release of an N-terminal amino acid, preferentially leucine, but not glutamic or aspartic acids.. In terms of biological role, presumably involved in the processing and regular turnover of intracellular proteins. Catalyzes the removal of unsubstituted N-terminal amino acids from various peptides. The polypeptide is Probable cytosol aminopeptidase (Rhodopirellula baltica (strain DSM 10527 / NCIMB 13988 / SH1)).